A 386-amino-acid polypeptide reads, in one-letter code: tRNA-specific 2-thiouridylase MnmA (386 aa).

Residues Gly-9–Ser-16 and Met-35 contribute to the ATP site. The interaction with target base in tRNA stretch occupies residues Asn-95–Asp-97. The active-site Nucleophile is the Cys-100. Cys-100 and Cys-196 form a disulfide bridge. Gly-124 is an ATP binding site. The interaction with tRNA stretch occupies residues Lys-146–Gln-148. Cys-196 functions as the Cysteine persulfide intermediate in the catalytic mechanism. An interaction with tRNA region spans residues Arg-308–Tyr-309.

The protein belongs to the MnmA/TRMU family.

It is found in the cytoplasm. It catalyses the reaction S-sulfanyl-L-cysteinyl-[protein] + uridine(34) in tRNA + AH2 + ATP = 2-thiouridine(34) in tRNA + L-cysteinyl-[protein] + A + AMP + diphosphate + H(+). Functionally, catalyzes the 2-thiolation of uridine at the wobble position (U34) of tRNA, leading to the formation of s(2)U34. The protein is tRNA-specific 2-thiouridylase MnmA of Burkholderia thailandensis (strain ATCC 700388 / DSM 13276 / CCUG 48851 / CIP 106301 / E264).